Reading from the N-terminus, the 136-residue chain is Holo-[acyl-carrier-protein] synthase (136 aa).

Mg(2+) is bound by residues Asp-7 and Glu-53.

Belongs to the P-Pant transferase superfamily. AcpS family. Mg(2+) is required as a cofactor.

Its subcellular location is the cytoplasm. It catalyses the reaction apo-[ACP] + CoA = holo-[ACP] + adenosine 3',5'-bisphosphate + H(+). In terms of biological role, transfers the 4'-phosphopantetheine moiety from coenzyme A to a Ser of acyl-carrier-protein. The sequence is that of Holo-[acyl-carrier-protein] synthase from Roseiflexus castenholzii (strain DSM 13941 / HLO8).